The sequence spans 207 residues: dITP/XTP pyrophosphatase (207 aa).

10–15 contributes to the substrate binding site; the sequence is TRNAGK. Positions 43 and 72 each coordinate Mg(2+). Asp72 (proton acceptor) is an active-site residue. Residues Ser73, 161 to 164, Lys184, and 189 to 190 each bind substrate; these read FGYD and HR.

The protein belongs to the HAM1 NTPase family. As to quaternary structure, homodimer. It depends on Mg(2+) as a cofactor.

The enzyme catalyses XTP + H2O = XMP + diphosphate + H(+). The catalysed reaction is dITP + H2O = dIMP + diphosphate + H(+). It catalyses the reaction ITP + H2O = IMP + diphosphate + H(+). Functionally, pyrophosphatase that catalyzes the hydrolysis of nucleoside triphosphates to their monophosphate derivatives, with a high preference for the non-canonical purine nucleotides XTP (xanthosine triphosphate), dITP (deoxyinosine triphosphate) and ITP. Seems to function as a house-cleaning enzyme that removes non-canonical purine nucleotides from the nucleotide pool, thus preventing their incorporation into DNA/RNA and avoiding chromosomal lesions. This is dITP/XTP pyrophosphatase from Nitratidesulfovibrio vulgaris (strain ATCC 29579 / DSM 644 / CCUG 34227 / NCIMB 8303 / VKM B-1760 / Hildenborough) (Desulfovibrio vulgaris).